Consider the following 127-residue polypeptide: Fumarate reductase subunit C (127 aa).

3 helical membrane-spanning segments follow: residues 30–50, 67–87, and 107–127; these read ATILPLIFFTICLLVGLGSLV, IVVALNIVALAGSLFHAQTFF, and VVVLAQWAAVAAITLLVLVIV.

The protein belongs to the FrdC family. Part of an enzyme complex containing four subunits: a flavoprotein (FrdA), an iron-sulfur protein (FrdB), and two hydrophobic anchor proteins (FrdC and FrdD).

It is found in the cell inner membrane. Functionally, anchors the catalytic components of the fumarate reductase complex to the cell membrane, binds quinones. The sequence is that of Fumarate reductase subunit C from Aliivibrio salmonicida (strain LFI1238) (Vibrio salmonicida (strain LFI1238)).